Reading from the N-terminus, the 285-residue chain is Probable endonuclease 4 (285 aa).

Zn(2+)-binding residues include histidine 69, histidine 109, glutamate 145, aspartate 179, histidine 182, histidine 216, aspartate 229, histidine 231, and glutamate 261.

This sequence belongs to the AP endonuclease 2 family. Zn(2+) is required as a cofactor.

The enzyme catalyses Endonucleolytic cleavage to 5'-phosphooligonucleotide end-products.. Functionally, endonuclease IV plays a role in DNA repair. It cleaves phosphodiester bonds at apurinic or apyrimidinic (AP) sites, generating a 3'-hydroxyl group and a 5'-terminal sugar phosphate. The sequence is that of Probable endonuclease 4 from Salmonella paratyphi C (strain RKS4594).